A 542-amino-acid polypeptide reads, in one-letter code: CTP synthase (542 aa).

The interval 1–265 is amidoligase domain; the sequence is MTRYIFVTGG…DDIVVERFGL (265 aa). Ser-13 is a binding site for CTP. Ser-13 is a UTP binding site. Residues 14-19 and Asp-71 each bind ATP; that span reads SLGKGI. Positions 71 and 139 each coordinate Mg(2+). Residues 146–148, 186–191, and Lys-222 contribute to the CTP site; these read DIE and KTKPTQ. Residues 186 to 191 and Lys-222 contribute to the UTP site; that span reads KTKPTQ. Residues 290-541 form the Glutamine amidotransferase type-1 domain; sequence TIAMVGKYME…VNAALKYSGK (252 aa). Gly-351 provides a ligand contact to L-glutamine. Cys-378 serves as the catalytic Nucleophile; for glutamine hydrolysis. L-glutamine is bound by residues 379-382, Glu-402, and Arg-469; that span reads LGMQ. Catalysis depends on residues His-514 and Glu-516.

Belongs to the CTP synthase family. In terms of assembly, homotetramer.

It carries out the reaction UTP + L-glutamine + ATP + H2O = CTP + L-glutamate + ADP + phosphate + 2 H(+). The enzyme catalyses L-glutamine + H2O = L-glutamate + NH4(+). It catalyses the reaction UTP + NH4(+) + ATP = CTP + ADP + phosphate + 2 H(+). It participates in pyrimidine metabolism; CTP biosynthesis via de novo pathway; CTP from UDP: step 2/2. Allosterically activated by GTP, when glutamine is the substrate; GTP has no effect on the reaction when ammonia is the substrate. The allosteric effector GTP functions by stabilizing the protein conformation that binds the tetrahedral intermediate(s) formed during glutamine hydrolysis. Inhibited by the product CTP, via allosteric rather than competitive inhibition. In terms of biological role, catalyzes the ATP-dependent amination of UTP to CTP with either L-glutamine or ammonia as the source of nitrogen. Regulates intracellular CTP levels through interactions with the four ribonucleotide triphosphates. The polypeptide is CTP synthase (Pseudomonas aeruginosa (strain LESB58)).